The following is a 574-amino-acid chain: Proline--tRNA ligase (574 aa).

This sequence belongs to the class-II aminoacyl-tRNA synthetase family. ProS type 1 subfamily. As to quaternary structure, homodimer.

It localises to the cytoplasm. It carries out the reaction tRNA(Pro) + L-proline + ATP = L-prolyl-tRNA(Pro) + AMP + diphosphate. Its function is as follows. Catalyzes the attachment of proline to tRNA(Pro) in a two-step reaction: proline is first activated by ATP to form Pro-AMP and then transferred to the acceptor end of tRNA(Pro). As ProRS can inadvertently accommodate and process non-cognate amino acids such as alanine and cysteine, to avoid such errors it has two additional distinct editing activities against alanine. One activity is designated as 'pretransfer' editing and involves the tRNA(Pro)-independent hydrolysis of activated Ala-AMP. The other activity is designated 'posttransfer' editing and involves deacylation of mischarged Ala-tRNA(Pro). The misacylated Cys-tRNA(Pro) is not edited by ProRS. This Anaeromyxobacter sp. (strain K) protein is Proline--tRNA ligase.